We begin with the raw amino-acid sequence, 131 residues long: Translation initiation factor 5A (131 aa).

Lysine 37 carries the hypusine modification.

Belongs to the eIF-5A family.

The protein resides in the cytoplasm. Its function is as follows. Functions by promoting the formation of the first peptide bond. The sequence is that of Translation initiation factor 5A from Methanococcus maripaludis (strain DSM 14266 / JCM 13030 / NBRC 101832 / S2 / LL).